A 142-amino-acid polypeptide reads, in one-letter code: Large ribosomal subunit protein uL13c (142 aa).

The protein belongs to the universal ribosomal protein uL13 family. In terms of assembly, part of the 50S ribosomal subunit.

The protein resides in the plastid. It localises to the chloroplast. The protein is Large ribosomal subunit protein uL13c of Porphyra purpurea (Red seaweed).